The primary structure comprises 1985 residues: Voltage-dependent L-type calcium channel subunit alpha-1F (1985 aa).

Positions 1–11 (MSESEVGKDTT) are enriched in basic and acidic residues. Residues 1–56 (MSESEVGKDTTPEPSPANGTGPGPEWGLCPGPPTVGTDTSGASGLGTPRRRTQHNK) are disordered. Over 1–92 (MSESEVGKDT…RSCISIVEWK (92 aa)) the chain is Cytoplasmic. The I repeat unit spans residues 79–375 (NPIRRSCISI…LVLGVLSGEF (297 aa)). A helical transmembrane segment spans residues 93-111 (PFDILILLTIFANCVALGV). Topologically, residues 112 to 129 (YIPFPEDDSNTANHNLEQ) are extracellular. A helical membrane pass occupies residues 130 to 149 (VEYVFLVIFTVETVLKIVAY). Residues 150–161 (GLVLHPSAYIRN) lie on the Cytoplasmic side of the membrane. The chain crosses the membrane as a helical span at residues 162–180 (GWNLLDFIIVVVGLFSVLL). The Extracellular segment spans residues 181-201 (EQGPGRPGDAPHTGGKPGGFD). A helical transmembrane segment spans residues 202 to 220 (VKALRAFRVLRPLRLVSGV). Residues 221 to 239 (PSLHIVVNSIMKALVPLLH) are Cytoplasmic-facing. Residues 240–259 (IALLVLFVIIIYAIIGLELF) traverse the membrane as a helical segment. At 260 to 347 (LGRMHKTCYF…WMQDAMGYEL (88 aa)) the chain is on the extracellular side. N-linked (GlcNAc...) asparagine glycosylation is present at Asn295. Glu330 contacts Ca(2+). Residues 348–372 (PWVYFVSLVIFGSFFVLNLVLGVLS) form a helical membrane-spanning segment. Residues 373-529 (GEFSKEREKA…ARCRRAVKSN (157 aa)) lie on the Cytoplasmic side of the membrane. The segment at 395–412 (QQMEEDLRGYLDWITQAE) is binding to the beta subunit. Residues 455–469 (SHSTRSTHSTSSHAS) are compositionally biased toward low complexity. A disordered region spans residues 455–490 (SHSTRSTHSTSSHASLPASDTGSMTDTPGDEDEEEG). Residues 515 to 761 (NRGLRARCRR…VFLAIAVDNL (247 aa)) form an II repeat. Residues 530-549 (ACYWAVLLLVFLNTLTIASE) form a helical membrane-spanning segment. Residues 550–564 (HHGQPLWLTQTQEYA) are Extracellular-facing. The chain crosses the membrane as a helical span at residues 565–583 (NKVLLCLFTVEMLLKLYGL). The Cytoplasmic portion of the chain corresponds to 584–591 (GPSVYVAS). A helical membrane pass occupies residues 592 to 610 (FFNRFDCFVVCGGILETTL). Residues 611–620 (VEVGAMQPLG) are Extracellular-facing. Residues 621-639 (ISVLRCVRLLRIFKVTRHW) form a helical membrane-spanning segment. Residues 640–658 (ASLSNLVASLLNSMKSIAS) are Cytoplasmic-facing. A helical transmembrane segment spans residues 659–679 (LLLLLFLFIIIFSLLGMQLFG). Residues 680–733 (GKFNFDQTHTKRSTFDTFPQALLTVFQILTGEDWNVVMYDGIMAYGGPFFPGML) are Extracellular-facing. Glu711 contributes to the Ca(2+) binding site. A helical membrane pass occupies residues 734 to 758 (VCVYFIILFICGNYILLNVFLAIAV). Residues 759–876 (DNLASGDAGT…KACHTLIHHH (118 aa)) lie on the Cytoplasmic side of the membrane. The tract at residues 766 to 834 (AGTAKDKGRE…EEEEENGAGH (69 aa)) is disordered. Basic and acidic residues predominate over residues 768 to 787 (TAKDKGREKSSEGNPPKENK). Over residues 810–830 (MEEEEEEEEEEEEEEEEEEEN) the composition is skewed to acidic residues. Residues 858 to 1140 (CLSQTNPLRK…FFMMNIFVGF (283 aa)) form an III repeat. Residues 877 to 895 (IFTSLILVFIILSSVSLAA) traverse the membrane as a helical segment. At 896-911 (EDPIRAHSFRNHILGY) the chain is on the extracellular side. Residues 912–931 (FDYAFTSIFTVEILLKMTVF) form a helical membrane-spanning segment. Over 932-943 (GAFLHRGSFCRS) the chain is Cytoplasmic. Residues 944 to 962 (WFNLLDLLVVSVSLISFGI) traverse the membrane as a helical segment. At 963-968 (HSSAIS) the chain is on the extracellular side. The helical transmembrane segment at 969–988 (VVKILRVLRVLRPLRAINRA) threads the bilayer. The Cytoplasmic portion of the chain corresponds to 989–1007 (KGLKHVVQCVFVAIRTIGN). Residues 1008-1027 (IMIVTTLLQFMFACIGVQLF) form a helical membrane-spanning segment. Residues 1028–1117 (KGKFYSCTDE…EGPIYNYHVE (90 aa)) are Extracellular-facing. Residues 1065–1155 (RLWVNSDFNF…RAQGEQEYQN (91 aa)) form a dihydropyridine binding region. Glu1091 lines the Ca(2+) pocket. The helical transmembrane segment at 1118-1138 (ISVFFIVYIIIIAFFMMNIFV) threads the bilayer. At 1139–1195 (GFVIITFRAQGEQEYQNCELDKNQRQCVEYALKAQPLRRYIPKNPHQYRVWATVNSR) the chain is on the cytoplasmic side. An IV repeat occupies 1182-1449 (NPHQYRVWAT…LFVAVIMDNF (268 aa)). A helical transmembrane segment spans residues 1196 to 1214 (AFEYLMFLLILLNTVALAM). Over 1215–1229 (QHYEQTAPFNYAMDI) the chain is Extracellular. Residues 1230–1249 (LNMVFTGLFTIEMVLKIIAF) form a helical membrane-spanning segment. Over 1250–1256 (KPKHYFA) the chain is Cytoplasmic. A helical membrane pass occupies residues 1257–1278 (DAWNTFDALIVVGSVVDIAVTE). The Extracellular portion of the chain corresponds to 1279–1295 (VNNGGHLGESSEDTSRI). A helical transmembrane segment spans residues 1296–1315 (SITFFRLFRVMRLVKLLSKG). Over 1316-1334 (EGIRTLLWTFIKSFQALPY) the chain is Cytoplasmic. A helical membrane pass occupies residues 1335-1354 (VALLIAMIFFIYAVIGMQMF). At 1355-1421 (GLVALQDGTQ…GEEFTCGSSF (67 aa)) the chain is on the extracellular side. Residues 1402–1468 (RCDPESDFGP…LGPHHLDEFK (67 aa)) are dihydropyridine binding. The phenylalkylamine binding stretch occupies residues 1414 to 1457 (EFTCGSSFAIVYFISFFMLCAFLIINLFVAVIMDNFDYLTRDWS). A helical membrane pass occupies residues 1422-1446 (AIVYFISFFMLCAFLIINLFVAVIM). Over 1447 to 1982 (DNFDYLTRDW…EDLGDEMACV (536 aa)) the chain is Cytoplasmic. 2 disordered regions span residues 1643–1729 (VTEE…PHRR) and 1746–1778 (LKGTQGQDNQNEEQELPDWTPDLDRAGRDSFEP). The segment covering 1644–1665 (TEEEEEEEEAVGQEAEEEEAEN) has biased composition (acidic residues). 2 stretches are compositionally biased toward polar residues: residues 1675 to 1687 (DSQPQSRWNSRIS) and 1713 to 1724 (NSRQPSVIQAGS). Residues 1767 to 1776 (DLDRAGRDSF) show a composition bias toward basic and acidic residues.

Belongs to the calcium channel alpha-1 subunit (TC 1.A.1.11) family. CACNA1F subfamily. Voltage-dependent calcium channels are multisubunit complexes, consisting of alpha-1, alpha-2, beta and delta subunits in a 1:1:1:1 ratio. The channel activity is directed by the pore-forming and voltage-sensitive alpha-1 subunit. In many cases, this subunit is sufficient to generate voltage-sensitive calcium channel activity. The auxiliary subunits beta and alpha-2/delta linked by a disulfide bridge regulate the channel activity. Interacts (via IQ domain) with CABP4; in a calcium independent manner. In terms of tissue distribution, expressed in the inner and outer nuclear layers and the genglion cell layer of the retina.

The protein localises to the membrane. The catalysed reaction is Ca(2+)(in) = Ca(2+)(out). Its function is as follows. Voltage-sensitive calcium channels (VSCC) mediate the entry of calcium ions into excitable cells and are also involved in a variety of calcium-dependent processes, including muscle contraction, hormone or neurotransmitter release, gene expression, cell motility, cell division and cell death. The isoform alpha-1F gives rise to L-type calcium currents. Long-lasting (L-type) calcium channels belong to the 'high-voltage activated' (HVA) group. They are blocked by dihydropyridines (DHP), phenylalkylamines, and by benzothiazepines. Activates at more negative voltages and does not undergo calcium-dependent inactivation (CDI), due to incoming calcium ions, during depolarization. The sequence is that of Voltage-dependent L-type calcium channel subunit alpha-1F from Mus musculus (Mouse).